The primary structure comprises 373 residues: Dual-specificity RNA methyltransferase RlmN (373 aa).

Glutamate 94 (proton acceptor) is an active-site residue. A Radical SAM core domain is found at 100-339 (EDDRATLCVS…VIVRKTRGDD (240 aa)). Residues cysteine 107 and cysteine 344 are joined by a disulfide bond. [4Fe-4S] cluster contacts are provided by cysteine 114, cysteine 118, and cysteine 121. S-adenosyl-L-methionine is bound by residues 168-169 (GE), serine 200, 222-224 (SIH), and asparagine 301. Cysteine 344 (S-methylcysteine intermediate) is an active-site residue.

This sequence belongs to the radical SAM superfamily. RlmN family. Requires [4Fe-4S] cluster as cofactor.

It localises to the cytoplasm. The catalysed reaction is adenosine(2503) in 23S rRNA + 2 reduced [2Fe-2S]-[ferredoxin] + 2 S-adenosyl-L-methionine = 2-methyladenosine(2503) in 23S rRNA + 5'-deoxyadenosine + L-methionine + 2 oxidized [2Fe-2S]-[ferredoxin] + S-adenosyl-L-homocysteine. It catalyses the reaction adenosine(37) in tRNA + 2 reduced [2Fe-2S]-[ferredoxin] + 2 S-adenosyl-L-methionine = 2-methyladenosine(37) in tRNA + 5'-deoxyadenosine + L-methionine + 2 oxidized [2Fe-2S]-[ferredoxin] + S-adenosyl-L-homocysteine. Functionally, specifically methylates position 2 of adenine 2503 in 23S rRNA and position 2 of adenine 37 in tRNAs. m2A2503 modification seems to play a crucial role in the proofreading step occurring at the peptidyl transferase center and thus would serve to optimize ribosomal fidelity. The polypeptide is Dual-specificity RNA methyltransferase RlmN (Shewanella sp. (strain ANA-3)).